A 450-amino-acid polypeptide reads, in one-letter code: Phosphoglucosamine mutase (450 aa).

Ser-101 serves as the catalytic Phosphoserine intermediate. Mg(2+) contacts are provided by Ser-101, Asp-240, Asp-242, and Asp-244. Ser-101 bears the Phosphoserine mark.

The protein belongs to the phosphohexose mutase family. Requires Mg(2+) as cofactor. In terms of processing, activated by phosphorylation.

It catalyses the reaction alpha-D-glucosamine 1-phosphate = D-glucosamine 6-phosphate. Its function is as follows. Catalyzes the conversion of glucosamine-6-phosphate to glucosamine-1-phosphate. The polypeptide is Phosphoglucosamine mutase (Streptococcus thermophilus (strain ATCC BAA-250 / LMG 18311)).